The chain runs to 95 residues: MAVKERVGTVVSDKMEKTVVVAVETRFPHPIYQKTVSRTTRYKAHDEDNSCRVGDRVRITETRPMSRQKRWAIAEVLSHSPKAAAAEAKAEEANQ.

This sequence belongs to the universal ribosomal protein uS17 family. Part of the 30S ribosomal subunit.

In terms of biological role, one of the primary rRNA binding proteins, it binds specifically to the 5'-end of 16S ribosomal RNA. The polypeptide is Small ribosomal subunit protein uS17 (Synechococcus sp. (strain CC9902)).